The following is a 148-amino-acid chain: UPF0260 protein YE2365 (148 aa).

The protein belongs to the UPF0260 family.

The polypeptide is UPF0260 protein YE2365 (Yersinia enterocolitica serotype O:8 / biotype 1B (strain NCTC 13174 / 8081)).